A 583-amino-acid chain; its full sequence is Eukaryotic translation initiation factor 3 subunit D (583 aa).

Positions 116–150 (GRAQRGAGQRGGRAGFQRVGAGRGQGDRFYDNRGG) are disordered. Positions 140-149 (QGDRFYDNRG) are enriched in basic and acidic residues. Residues 298-312 (SLDLVTVNENAIDAP) form an RNA gate region. The segment at 561–583 (NTFEEDEEAAAEEEEQKAEEDEE) is disordered. The segment covering 563 to 583 (FEEDEEAAAEEEEQKAEEDEE) has biased composition (acidic residues).

This sequence belongs to the eIF-3 subunit D family. As to quaternary structure, component of the eukaryotic translation initiation factor 3 (eIF-3) complex.

The protein localises to the cytoplasm. MRNA cap-binding component of the eukaryotic translation initiation factor 3 (eIF-3) complex, which is involved in protein synthesis of a specialized repertoire of mRNAs and, together with other initiation factors, stimulates binding of mRNA and methionyl-tRNAi to the 40S ribosome. The eIF-3 complex specifically targets and initiates translation of a subset of mRNAs involved in cell proliferation. In the eIF-3 complex, eif3d specifically recognizes and binds the 7-methylguanosine cap of a subset of mRNAs. The protein is Eukaryotic translation initiation factor 3 subunit D of Aspergillus oryzae (strain ATCC 42149 / RIB 40) (Yellow koji mold).